The chain runs to 55 residues: Large ribosomal subunit protein bL33 (55 aa).

It belongs to the bacterial ribosomal protein bL33 family.

This is Large ribosomal subunit protein bL33 from Enterobacter sp. (strain 638).